The sequence spans 627 residues: uncharacterized protein (627 aa).

Disordered regions lie at residues 141–187 (LRYP…TPPS) and 490–510 (ENENTNGSANNSTYTNGGPRT). Over residues 491 to 510 (NENTNGSANNSTYTNGGPRT) the composition is skewed to polar residues. Ser-559 bears the Phosphoserine mark.

This is an uncharacterized protein from Saccharomyces cerevisiae (strain ATCC 204508 / S288c) (Baker's yeast).